Reading from the N-terminus, the 262-residue chain is Shikimate dehydrogenase (NADP(+)) (262 aa).

Residues 15 to 17 (SRS) and Thr62 contribute to the shikimate site. Residue Lys66 is the Proton acceptor of the active site. Residue Glu78 coordinates NADP(+). Residues Asn87 and Asp102 each coordinate shikimate. NADP(+) contacts are provided by residues 126 to 130 (GAGGA), 150 to 155 (NRTLAR), and Met214. A shikimate-binding site is contributed by Tyr216. Residue Gly236 participates in NADP(+) binding.

Belongs to the shikimate dehydrogenase family. As to quaternary structure, homodimer.

It catalyses the reaction shikimate + NADP(+) = 3-dehydroshikimate + NADPH + H(+). It functions in the pathway metabolic intermediate biosynthesis; chorismate biosynthesis; chorismate from D-erythrose 4-phosphate and phosphoenolpyruvate: step 4/7. In terms of biological role, involved in the biosynthesis of the chorismate, which leads to the biosynthesis of aromatic amino acids. Catalyzes the reversible NADPH linked reduction of 3-dehydroshikimate (DHSA) to yield shikimate (SA). The polypeptide is Shikimate dehydrogenase (NADP(+)) (Acinetobacter baumannii (strain SDF)).